Here is a 250-residue protein sequence, read N- to C-terminus: Oil body-associated protein 2B (250 aa).

Residues 1–29 (MSSSDQNPAATPASSGPAEPSPPGRPTAV) form a disordered region. Low complexity predominate over residues 8–18 (PAATPASSGPA).

This sequence belongs to the OBAP family.

This is Oil body-associated protein 2B from Zea mays (Maize).